The primary structure comprises 124 residues: Cytochrome c2 (124 aa).

A Pyrrolidone carboxylic acid modification is found at Gln1. The heme c site is built by Cys16, Cys19, His20, and Met85.

Belongs to the cytochrome c family. Binds 1 heme c group covalently per subunit.

It localises to the periplasm. In terms of biological role, cytochrome c2 is found mainly in purple, non-sulfur, photosynthetic bacteria where it functions as the electron donor to the oxidized bacteriochlorophyll in the photophosphorylation pathway. However, it may also have a role in the respiratory chain and is found in some non-photosynthetic bacteria. In Afifella marina (Rhodobium marinum), this protein is Cytochrome c2.